A 208-amino-acid polypeptide reads, in one-letter code: Translation initiation factor 6 (208 aa).

This sequence belongs to the eIF-6 family.

Binds to the 50S ribosomal subunit and prevents its association with the 30S ribosomal subunit to form the 70S initiation complex. The polypeptide is Translation initiation factor 6 (eif6) (Nanoarchaeum equitans (strain Kin4-M)).